The chain runs to 198 residues: Recombination protein RecR (198 aa).

The C4-type zinc finger occupies 57–72; the sequence is CSVCGNITDEDPCEIC. A Toprim domain is found at 80–175; that stretch reads EMILVVEQPK…KVTRLAHGLA (96 aa).

This sequence belongs to the RecR family.

Functionally, may play a role in DNA repair. It seems to be involved in an RecBC-independent recombinational process of DNA repair. It may act with RecF and RecO. This is Recombination protein RecR from Latilactobacillus sakei subsp. sakei (strain 23K) (Lactobacillus sakei subsp. sakei).